Reading from the N-terminus, the 278-residue chain is Msm operon regulatory protein (278 aa).

In terms of domain architecture, HTH araC/xylS-type spans asparagine 176–glutamate 274. 2 DNA-binding regions (H-T-H motif) span residues asparagine 193–threonine 214 and isoleucine 241–phenylalanine 264.

In terms of biological role, regulatory protein for the msm operon for multiple sugar metabolism. Activates the transcription of the msmEFGK, aga, dexB and gftA genes. The sequence is that of Msm operon regulatory protein (msmR) from Streptococcus mutans serotype c (strain ATCC 700610 / UA159).